Consider the following 211-residue polypeptide: ATP phosphoribosyltransferase (211 aa).

The protein belongs to the ATP phosphoribosyltransferase family. Short subfamily. Heteromultimer composed of HisG and HisZ subunits.

It is found in the cytoplasm. It catalyses the reaction 1-(5-phospho-beta-D-ribosyl)-ATP + diphosphate = 5-phospho-alpha-D-ribose 1-diphosphate + ATP. It functions in the pathway amino-acid biosynthesis; L-histidine biosynthesis; L-histidine from 5-phospho-alpha-D-ribose 1-diphosphate: step 1/9. Its function is as follows. Catalyzes the condensation of ATP and 5-phosphoribose 1-diphosphate to form N'-(5'-phosphoribosyl)-ATP (PR-ATP). Has a crucial role in the pathway because the rate of histidine biosynthesis seems to be controlled primarily by regulation of HisG enzymatic activity. The protein is ATP phosphoribosyltransferase of Pseudomonas aeruginosa (strain UCBPP-PA14).